Here is a 383-residue protein sequence, read N- to C-terminus: BRISC and BRCA1-A complex member 2 (383 aa).

The residue at position 1 (M1) is an N-acetylmethionine. S2 bears the Phosphoserine mark. UEV-like regions lie at residues 30–147 (DATN…TLLE) and 275–364 (IAAF…RAKA).

It belongs to the BABAM2 family. Component of the ARISC complex, at least composed of UIMC1/RAP80, ABRAXAS1, BRCC3/BRCC36, BABAM2 and BABAM1/NBA1. Component of the BRCA1-A complex, at least composed of BRCA1, BARD1, UIMC1/RAP80, ABRAXAS1, BRCC3/BRCC36, BABAM2 and BABAM1/NBA1. In the BRCA1-A complex, interacts directly with ABRAXAS1, BRCC3/BRCC36 and BABAM1/NBA1. Binds polyubiquitin. Component of the BRISC complex, at least composed of ABRAXAS2, BRCC3/BRCC36, BABAM2 and BABAM1/NBA1. Identified in a complex with SHMT2 and the other subunits of the BRISC complex. Component of the BRCA1/BRCA2 containing complex (BRCC), which also contains BRCA1, BRCA2, BARD1, BRCC3/BRCC36 and RAD51. BRCC is a ubiquitin E3 ligase complex that enhances cellular survival following DNA damage. May interact with FAS and TNFRSF1A.

It is found in the cytoplasm. The protein localises to the nucleus. In terms of biological role, component of the BRCA1-A complex, a complex that specifically recognizes 'Lys-63'-linked ubiquitinated histones H2A and H2AX at DNA lesions sites, leading to target the BRCA1-BARD1 heterodimer to sites of DNA damage at double-strand breaks (DSBs). The BRCA1-A complex also possesses deubiquitinase activity that specifically removes 'Lys-63'-linked ubiquitin on histones H2A and H2AX. In the BRCA1-A complex, it acts as an adapter that bridges the interaction between BABAM1/NBA1 and the rest of the complex, thereby being required for the complex integrity and modulating the E3 ubiquitin ligase activity of the BRCA1-BARD1 heterodimer. Component of the BRISC complex, a multiprotein complex that specifically cleaves 'Lys-63'-linked ubiquitin in various substrates. Within the BRISC complex, acts as an adapter that bridges the interaction between BABAM1/NBA1 and the rest of the complex, thereby being required for the complex integrity. The BRISC complex is required for normal mitotic spindle assembly and microtubule attachment to kinetochores via its role in deubiquitinating NUMA1. The BRISC complex plays a role in interferon signaling via its role in the deubiquitination of the interferon receptor IFNAR1; deubiquitination increases IFNAR1 activity by enhancing its stability and cell surface expression. Down-regulates the response to bacterial lipopolysaccharide (LPS) via its role in IFNAR1 deubiquitination. May play a role in homeostasis or cellular differentiation in cells of neural, epithelial and germline origins. May also act as a death receptor-associated anti-apoptotic protein, which inhibits the mitochondrial apoptotic pathway. May regulate TNF-alpha signaling through its interactions with TNFRSF1A; however these effects may be indirect. This Rattus norvegicus (Rat) protein is BRISC and BRCA1-A complex member 2.